The chain runs to 138 residues: Putative pre-16S rRNA nuclease (138 aa).

The protein belongs to the YqgF nuclease family.

It is found in the cytoplasm. In terms of biological role, could be a nuclease involved in processing of the 5'-end of pre-16S rRNA. The protein is Putative pre-16S rRNA nuclease of Geobacillus sp. (strain WCH70).